Consider the following 146-residue polypeptide: Holo-[acyl-carrier-protein] synthase (146 aa).

Residues D8 and E61 each coordinate Mg(2+).

Belongs to the P-Pant transferase superfamily. AcpS family. It depends on Mg(2+) as a cofactor.

The protein localises to the cytoplasm. The catalysed reaction is apo-[ACP] + CoA = holo-[ACP] + adenosine 3',5'-bisphosphate + H(+). Its function is as follows. Transfers the 4'-phosphopantetheine moiety from coenzyme A to a Ser of acyl-carrier-protein. The sequence is that of Holo-[acyl-carrier-protein] synthase from Rhodopseudomonas palustris (strain ATCC BAA-98 / CGA009).